Here is a 698-residue protein sequence, read N- to C-terminus: Sulfhydryl oxidase 2 (698 aa).

Positions 1 to 21 (MAAAGAAVARSPGIGAGPALR) are cleaved as a signal peptide. A Thioredoxin domain is found at 34–178 (PRLLVLLAAA…RQTMIDFLQN (145 aa)). Residue asparagine 77 is glycosylated (N-linked (GlcNAc...) asparagine). Residues cysteine 91 and cysteine 94 each act as nucleophile in the active site. Cystine bridges form between cysteine 91–cysteine 94 and cysteine 122–cysteine 131. Residues asparagine 178, asparagine 218, and asparagine 266 are each glycosylated (N-linked (GlcNAc...) asparagine). A disulfide bridge links cysteine 418 with cysteine 430. One can recognise an ERV/ALR sulfhydryl oxidase domain in the interval 421-530 (SRSELRGYPC…EDPRFPKLQW (110 aa)). FAD is bound by residues arginine 426, tryptophan 433, histidine 437, glutamate 478, histidine 482, 505–512 (WKKHNMVN), lysine 527, and tryptophan 530. A disulfide bridge connects residues cysteine 476 and cysteine 479. Cysteine 536 and cysteine 539 are disulfide-bonded. Positions 570 to 624 (TYSADQGDSSEGGTLARGEEEEKRLTPPEVSHGDRDTQSVRPPGALGPRPALPES) are disordered. Over residues 572-581 (SADQGDSSEG) the composition is skewed to polar residues. Serine 579 is modified (phosphoserine). A compositionally biased stretch (basic and acidic residues) spans 586–607 (RGEEEEKRLTPPEVSHGDRDTQ). A compositionally biased stretch (low complexity) spans 610 to 622 (RPPGALGPRPALP). Residues 662–682 (SLCVVLYVASSLFLMVMYFFF) form a helical membrane-spanning segment.

It belongs to the quiescin-sulfhydryl oxidase (QSOX) family. FAD serves as cofactor. Expressed in pancreas, brain, placenta, kidney, heart and fetal tissues. Weakly expressed in lung, liver and skeletal muscles.

It localises to the membrane. It is found in the secreted. The protein resides in the cell membrane. Its subcellular location is the nucleus membrane. It catalyses the reaction 2 R'C(R)SH + O2 = R'C(R)S-S(R)CR' + H2O2. In terms of biological role, catalyzes the oxidation of sulfhydryl groups in peptide and protein thiols to disulfides with the reduction of oxygen to hydrogen peroxide. May contribute to disulfide bond formation in a variety of secreted proteins. Also seems to play a role in regulating the sensitization of neuroblastoma cells for interferon-gamma-induced apoptosis. The protein is Sulfhydryl oxidase 2 (QSOX2) of Homo sapiens (Human).